Consider the following 233-residue polypeptide: Small ribosomal subunit protein uS3 (233 aa).

A KH type-2 domain is found at 39–107 (IRAFLKRKLY…DVNINIKEER (69 aa)). A compositionally biased stretch (basic and acidic residues) spans 212–222 (MQPEKTEESAP). Positions 212-233 (MQPEKTEESAPAKKPRRTRRGK) are disordered. A compositionally biased stretch (basic residues) spans 224–233 (KKPRRTRRGK).

It belongs to the universal ribosomal protein uS3 family. As to quaternary structure, part of the 30S ribosomal subunit. Forms a tight complex with proteins S10 and S14.

Its function is as follows. Binds the lower part of the 30S subunit head. Binds mRNA in the 70S ribosome, positioning it for translation. This is Small ribosomal subunit protein uS3 from Campylobacter jejuni subsp. jejuni serotype O:6 (strain 81116 / NCTC 11828).